The following is a 247-amino-acid chain: ATP synthase subunit a (247 aa).

The next 6 helical transmembrane spans lie at 24 to 44 (IAFTNSSAYMFLAVALTSLLM), 82 to 102 (FFPFVFSIFMLVTVSNLVGII), 112 to 132 (IIVTAALAFLVFFTVLIYGFY), 141 to 161 (LFVPSGIPVVILPLVVTIEVI), 194 to 214 (MLGAMGIVGVFGAVLPLALVV), and 219 to 239 (LELLVAFLQAYVFTILTCIYI).

Belongs to the ATPase A chain family. As to quaternary structure, F-type ATPases have 2 components, CF(1) - the catalytic core - and CF(0) - the membrane proton channel. CF(1) has five subunits: alpha(3), beta(3), gamma(1), delta(1), epsilon(1). CF(0) has three main subunits: a(1), b(2) and c(9-12). The alpha and beta chains form an alternating ring which encloses part of the gamma chain. CF(1) is attached to CF(0) by a central stalk formed by the gamma and epsilon chains, while a peripheral stalk is formed by the delta and b chains.

The protein resides in the cell inner membrane. Its function is as follows. Key component of the proton channel; it plays a direct role in the translocation of protons across the membrane. In Nitrobacter winogradskyi (strain ATCC 25391 / DSM 10237 / CIP 104748 / NCIMB 11846 / Nb-255), this protein is ATP synthase subunit a.